Here is a 340-residue protein sequence, read N- to C-terminus: Glycerol-3-phosphate dehydrogenase [NAD(P)+] (340 aa).

4 residues coordinate NADPH: S14, F15, R35, and K108. Sn-glycerol 3-phosphate contacts are provided by K108 and G136. NADPH is bound at residue A140. Residues K191, D244, S254, R255, and N256 each contribute to the sn-glycerol 3-phosphate site. The Proton acceptor role is filled by K191. Residue R255 participates in NADPH binding. E281 lines the NADPH pocket.

The protein belongs to the NAD-dependent glycerol-3-phosphate dehydrogenase family.

The protein resides in the cytoplasm. It carries out the reaction sn-glycerol 3-phosphate + NAD(+) = dihydroxyacetone phosphate + NADH + H(+). The catalysed reaction is sn-glycerol 3-phosphate + NADP(+) = dihydroxyacetone phosphate + NADPH + H(+). It functions in the pathway membrane lipid metabolism; glycerophospholipid metabolism. In terms of biological role, catalyzes the reduction of the glycolytic intermediate dihydroxyacetone phosphate (DHAP) to sn-glycerol 3-phosphate (G3P), the key precursor for phospholipid synthesis. The chain is Glycerol-3-phosphate dehydrogenase [NAD(P)+] from Pseudomonas paraeruginosa (strain DSM 24068 / PA7) (Pseudomonas aeruginosa (strain PA7)).